Here is a 453-residue protein sequence, read N- to C-terminus: DDB1- and CUL4-associated factor 12 (453 aa).

The span at 1 to 12 (MARKAVSRKRKA) shows a compositional bias: basic residues. Positions 1-34 (MARKAVSRKRKASASPGAGSDAQGPQFGWDHSLH) are disordered. The required for nuclear location and interaction with MOV10 stretch occupies residues 1–38 (MARKAVSRKRKASASPGAGSDAQGPQFGWDHSLHKRKR). Phosphoserine is present on S15. 4 WD repeats span residues 138–178 (QQGC…PVCV), 182–220 (GHKD…LTKS), 250–289 (PDNC…SKLL), and 338–375 (ERGS…FLEE).

The protein belongs to the WD repeat DCAF12 family. Component of the DCX(DCAF12) E3 ubiquitin ligase complex, at least composed of CUL4 (CUL4A or CUL4B), DDB1, DCAF12 and RBX1.

Its subcellular location is the cytoplasm. The protein resides in the cytoskeleton. It is found in the microtubule organizing center. The protein localises to the centrosome. It localises to the nucleus. It participates in protein modification; protein ubiquitination. Substrate-recognition component of a DCX (DDB1-CUL4-X-box) E3 ubiquitin-protein ligase complex of the DesCEND (destruction via C-end degrons) pathway, which recognizes a C-degron located at the extreme C terminus of target proteins, leading to their ubiquitination and degradation. The C-degron recognized by the DesCEND pathway is usually a motif of less than ten residues and can be present in full-length proteins, truncated proteins or proteolytically cleaved forms. The DCX(DCAF12) complex specifically recognizes proteins with a diglutamate (Glu-Glu) at the C-terminus, such as MAGEA3, MAGEA6 and CCT5, leading to their ubiquitination and degradation. Ubiquitination of MAGEA3, MAGEA6 by DCX(DCAF12) complex is required for starvation-induced autophagy. Also directly recognizes the C-terminal glutamate-leucine (Glu-Leu) degron as an alternative degron in proteins such as MOV10, leading to their ubiquitination and degradation. Controls the protein level of MOV10 during spermatogenesis and in T cells, especially after their activation. This chain is DDB1- and CUL4-associated factor 12, found in Mus musculus (Mouse).